Here is a 272-residue protein sequence, read N- to C-terminus: Acetyl-coenzyme A carboxylase carboxyl transferase subunit alpha (272 aa).

Residues 1–248 (MDKDFMKINV…KKTIVDSLLE (248 aa)) enclose the CoA carboxyltransferase C-terminal domain.

It belongs to the AccA family. In terms of assembly, acetyl-CoA carboxylase is a heterohexamer composed of biotin carboxyl carrier protein (AccB), biotin carboxylase (AccC) and two subunits each of ACCase subunit alpha (AccA) and ACCase subunit beta (AccD).

The protein resides in the cytoplasm. The enzyme catalyses N(6)-carboxybiotinyl-L-lysyl-[protein] + acetyl-CoA = N(6)-biotinyl-L-lysyl-[protein] + malonyl-CoA. Its pathway is lipid metabolism; malonyl-CoA biosynthesis; malonyl-CoA from acetyl-CoA: step 1/1. Its function is as follows. Component of the acetyl coenzyme A carboxylase (ACC) complex. First, biotin carboxylase catalyzes the carboxylation of biotin on its carrier protein (BCCP) and then the CO(2) group is transferred by the carboxyltransferase to acetyl-CoA to form malonyl-CoA. This Clostridium beijerinckii (strain ATCC 51743 / NCIMB 8052) (Clostridium acetobutylicum) protein is Acetyl-coenzyme A carboxylase carboxyl transferase subunit alpha.